Consider the following 505-residue polypeptide: Deoxyguanosinetriphosphate triphosphohydrolase (505 aa).

An HD domain is found at 66–273; the sequence is RLTHSMEVQQ…MEAADDISYC (208 aa).

Belongs to the dGTPase family. Type 1 subfamily. Homotetramer. Requires Mg(2+) as cofactor.

The catalysed reaction is dGTP + H2O = 2'-deoxyguanosine + triphosphate + H(+). Functionally, dGTPase preferentially hydrolyzes dGTP over the other canonical NTPs. This Shigella boydii serotype 18 (strain CDC 3083-94 / BS512) protein is Deoxyguanosinetriphosphate triphosphohydrolase.